Consider the following 296-residue polypeptide: tRNA dimethylallyltransferase (296 aa).

2 to 9 (GPTASGKT) provides a ligand contact to ATP. Substrate is bound at residue 4-9 (TASGKT). Interaction with substrate tRNA regions lie at residues 27 to 30 (DSAL), 151 to 155 (QRLSR), and 232 to 237 (RCVGYR).

Belongs to the IPP transferase family. In terms of assembly, monomer. Mg(2+) is required as a cofactor.

The catalysed reaction is adenosine(37) in tRNA + dimethylallyl diphosphate = N(6)-dimethylallyladenosine(37) in tRNA + diphosphate. In terms of biological role, catalyzes the transfer of a dimethylallyl group onto the adenine at position 37 in tRNAs that read codons beginning with uridine, leading to the formation of N6-(dimethylallyl)adenosine (i(6)A). The polypeptide is tRNA dimethylallyltransferase (Shewanella woodyi (strain ATCC 51908 / MS32)).